The chain runs to 72 residues: Cell division protein ZapB (72 aa).

Residues 3 to 71 (LSIIDQLEEK…LRSLLGQIDN (69 aa)) are a coiled coil.

Belongs to the ZapB family. Homodimer. The ends of the coiled-coil dimer bind to each other, forming polymers. Interacts with FtsZ.

It localises to the cytoplasm. In terms of biological role, non-essential, abundant cell division factor that is required for proper Z-ring formation. It is recruited early to the divisome by direct interaction with FtsZ, stimulating Z-ring assembly and thereby promoting cell division earlier in the cell cycle. Its recruitment to the Z-ring requires functional FtsA or ZipA. The protein is Cell division protein ZapB of Haemophilus ducreyi (strain 35000HP / ATCC 700724).